Here is a 201-residue protein sequence, read N- to C-terminus: MRTVGIGAGVRRLGRAVVMAAAVGGLVLGSAGASNAAGVMTGAKFTQIQFGMTRQQVLDIAGAENCETGGSFGDSIHCRGHAAGDYYAYATFGFTSAAADAKVDSKSQEKLLAPSAPTLTLAKFNQVTVGMTRAQVLATVGQGSCTTWSEYYPAYPSTAGVTLSLSCFDVDGYSSTGFYRGSAHLWFTDGVLQGKRQWDLV.

Residues 1–36 form the signal peptide; it reads MRTVGIGAGVRRLGRAVVMAAAVGGLVLGSAGASNA. Tandem repeats lie at residues 37–112 and 116–201. Intrachain disulfides connect cysteine 66/cysteine 78 and cysteine 145/cysteine 167.

Interacts with E.coli beta-lactamase TEM-1; interaction inhibits hydrolysis of beta-lactam antibiotics. Interacts with K.pneumoniae beta-lactamase SHV-1. Interacts with K.pneumoniae beta-lactamases KPC-2 and KPC-3; interaction inhibits hydrolysis of beta-lactam antibiotics. Interacts with E.coli beta-lactamases CTX-M-14 and CTX-M-15; interaction inhibits hydrolysis of beta-lactam antibiotics.

Its subcellular location is the secreted. In terms of biological role, inhibits a wide variety of beta lactamases. In Streptomyces clavuligerus, this protein is Beta-lactamase inhibitory protein.